Reading from the N-terminus, the 407-residue chain is Arrestin domain-containing protein 2 (407 aa).

The protein belongs to the arrestin family. As to quaternary structure, interacts with WWP1 (via WW domains).

In Mus musculus (Mouse), this protein is Arrestin domain-containing protein 2 (Arrdc2).